The sequence spans 389 residues: S-adenosylmethionine synthase (389 aa).

An ATP-binding site is contributed by H16. A Mg(2+)-binding site is contributed by D18. E44 lines the K(+) pocket. Residues E57 and Q101 each coordinate L-methionine. Residues 101-111 form a flexible loop region; sequence QSVDIAQGVNE. ATP is bound by residues 168–170, 234–235, D243, 249–250, A266, and K270; these read DAK, RF, and RK. Position 243 (D243) interacts with L-methionine. L-methionine is bound at residue K274.

This sequence belongs to the AdoMet synthase family. Homotetramer; dimer of dimers. The cofactor is Mg(2+). It depends on K(+) as a cofactor.

Its subcellular location is the cytoplasm. It carries out the reaction L-methionine + ATP + H2O = S-adenosyl-L-methionine + phosphate + diphosphate. It participates in amino-acid biosynthesis; S-adenosyl-L-methionine biosynthesis; S-adenosyl-L-methionine from L-methionine: step 1/1. In terms of biological role, catalyzes the formation of S-adenosylmethionine (AdoMet) from methionine and ATP. The overall synthetic reaction is composed of two sequential steps, AdoMet formation and the subsequent tripolyphosphate hydrolysis which occurs prior to release of AdoMet from the enzyme. The protein is S-adenosylmethionine synthase of Magnetococcus marinus (strain ATCC BAA-1437 / JCM 17883 / MC-1).